The following is a 577-amino-acid chain: Arginine--tRNA ligase (577 aa).

A 'HIGH' region motif is present at residues 122–132 (PNVAKEMHVGH).

This sequence belongs to the class-I aminoacyl-tRNA synthetase family. As to quaternary structure, monomer.

The protein localises to the cytoplasm. It catalyses the reaction tRNA(Arg) + L-arginine + ATP = L-arginyl-tRNA(Arg) + AMP + diphosphate. The polypeptide is Arginine--tRNA ligase (Vibrio campbellii (strain ATCC BAA-1116)).